We begin with the raw amino-acid sequence, 105 residues long: MKVHKGDTVLVISGKDKGAKGKVLQAYPDRNRVLVEGVNRIKKHTAISTTQRGARSGGIVTQEAPIHVSNVMVVDSDGKPTRIGYRVDEETGKRVRISKRNGKDI.

It belongs to the universal ribosomal protein uL24 family. As to quaternary structure, part of the 50S ribosomal subunit.

Its function is as follows. One of two assembly initiator proteins, it binds directly to the 5'-end of the 23S rRNA, where it nucleates assembly of the 50S subunit. In terms of biological role, one of the proteins that surrounds the polypeptide exit tunnel on the outside of the subunit. This is Large ribosomal subunit protein uL24 from Mycobacterium tuberculosis (strain CDC 1551 / Oshkosh).